The sequence spans 285 residues: Putative sugar uptake protein lmo0424 (285 aa).

Helical transmembrane passes span 2 to 21 (SIYL…PIIA), 31 to 50 (QLLG…FWIL), 55 to 77 (TVLS…LLQF), 111 to 133 (WQTV…GVVM), 146 to 168 (SVSF…YVVT), 172 to 194 (FDVT…AIGI), 207 to 229 (VTFN…LATA), 233 to 255 (VATS…ILIF), and 262 to 284 (LEWT…LSLL).

The protein belongs to the GRP transporter (TC 2.A.7.5) family.

It localises to the cell membrane. The chain is Putative sugar uptake protein lmo0424 from Listeria monocytogenes serovar 1/2a (strain ATCC BAA-679 / EGD-e).